The following is a 214-amino-acid chain: ATP synthase subunit 5, mitochondrial (214 aa).

A mitochondrion-targeting transit peptide spans 1–24; that stretch reads MFASRAIRMMSMRPMARTMATKAA.

As to quaternary structure, F-type ATP synthases have 2 components, the catalytic core F(1) and the membrane-embedded component F(0), linked together by a central stalk and a peripheral stalk. The central stalk, also called rotor shaft, is often seen as part of F(1). The peripheral stalk is seen as part of F(0). F(0) contains the membrane channel next to the rotor. F-type ATP synthases form dimers but each monomer functions independently in ATP generation. The dimer consists of 17 different polypeptides: ATP1 (subunit alpha, 3 molecules per monomer, part of F(1)), ATP2 (subunit beta, 3 copies per monomer, part of F(1)), ATP3 (subunit gamma, part of the central stalk), ATP4 (subunit b, part of the peripheral stalk), ATP5/OSCP (subunit 5/OSCP, part of the peripheral stalk), ATP6 (subunit a, part of the peripheral stalk), ATP7 (subunit d, part of the peripheral stalk), ATP8 (subunit 8, part of the peripheral stalk), OLI1 (subunit c, part of the rotor, 10 molecules per monomer), ATP14 (subunit h, part of the peripheral stalk), ATP15 (subunit epsilon, part of the central stalk), ATP16 (subunit delta, part of the central stalk), ATP17 (subunit f, part of the peripheral stalk), ATP18 (subunit i/j, part of the peripheral stalk), ATP19 (subunit k, dimer-specific, at interface between monomers), ATP20 (subunit g, at interface between monomers), TIM11 (subunit e, at interface between monomers).

It is found in the mitochondrion inner membrane. Functionally, mitochondrial membrane ATP synthase (F(1)F(0) ATP synthase or Complex V) produces ATP from ADP in the presence of a proton gradient across the membrane which is generated by electron transport complexes of the respiratory chain. F-type ATP synthases consist of two structural domains, F(1) - containing the extramembraneous catalytic core, and F(0) - containing the membrane proton channel, linked together by a central stalk and a peripheral stalk. During catalysis, ATP synthesis in the catalytic domain of F(1) is coupled via a rotary mechanism of the central stalk subunits to proton translocation. Part of the complex F(0) domain and the peripheral stalk, which acts as a stator to hold the catalytic alpha/ATP1(3)beta/ATP2(3) subcomplex and subunit a/ATP6 static relative to the rotary elements. This is ATP synthase subunit 5, mitochondrial from Yarrowia lipolytica (strain CLIB 122 / E 150) (Yeast).